Here is a 499-residue protein sequence, read N- to C-terminus: Guanosine-5'-triphosphate,3'-diphosphate pyrophosphatase (499 aa).

It belongs to the GppA/Ppx family. GppA subfamily.

It carries out the reaction guanosine 3'-diphosphate 5'-triphosphate + H2O = guanosine 3',5'-bis(diphosphate) + phosphate + H(+). It functions in the pathway purine metabolism; ppGpp biosynthesis; ppGpp from GTP: step 2/2. Its function is as follows. Catalyzes the conversion of pppGpp to ppGpp. Guanosine pentaphosphate (pppGpp) is a cytoplasmic signaling molecule which together with ppGpp controls the 'stringent response', an adaptive process that allows bacteria to respond to amino acid starvation, resulting in the coordinated regulation of numerous cellular activities. This is Guanosine-5'-triphosphate,3'-diphosphate pyrophosphatase from Sodalis glossinidius (strain morsitans).